Reading from the N-terminus, the 134-residue chain is Small ribosomal subunit protein uS8c (134 aa).

This sequence belongs to the universal ribosomal protein uS8 family. As to quaternary structure, part of the 30S ribosomal subunit.

Its subcellular location is the plastid. The protein resides in the chloroplast. Functionally, one of the primary rRNA binding proteins, it binds directly to 16S rRNA central domain where it helps coordinate assembly of the platform of the 30S subunit. The polypeptide is Small ribosomal subunit protein uS8c (rps8) (Phaseolus vulgaris (Kidney bean)).